The chain runs to 381 residues: Creatine kinase M-type (381 aa).

Positions 11 to 98 (KLNYKPEEEY…FDPIIQDRHG (88 aa)) constitute a Phosphagen kinase N-terminal domain. The 243-residue stretch at 125–367 (YVLSSRVRTG…KLMVEMEKKL (243 aa)) folds into the Phosphagen kinase C-terminal domain. 128–132 (SSRVR) provides a ligand contact to ATP. Phosphoserine is present on serine 164. Threonine 166 is subject to Phosphothreonine. Serine 178 is subject to Phosphoserine. Threonine 180 is modified (phosphothreonine). Histidine 191 lines the ATP pocket. Residue serine 199 is modified to Phosphoserine. The ATP site is built by arginine 236 and arginine 292. Phosphothreonine occurs at positions 313 and 322. ATP-binding positions include 320–325 (RGTGGV) and aspartate 335. A Phosphoserine modification is found at serine 372.

Belongs to the ATP:guanido phosphotransferase family. Dimer of identical or non-identical chains, which can be either B (brain type) or M (muscle type). With MM being the major form in skeletal muscle and myocardium, MB existing in myocardium, and BB existing in many tissues, especially brain.

Its subcellular location is the cytoplasm. The catalysed reaction is creatine + ATP = N-phosphocreatine + ADP + H(+). Its function is as follows. Reversibly catalyzes the transfer of phosphate between ATP and various phosphogens (e.g. creatine phosphate). Creatine kinase isoenzymes play a central role in energy transduction in tissues with large, fluctuating energy demands, such as skeletal muscle, heart, brain and spermatozoa. The protein is Creatine kinase M-type (CKM) of Canis lupus familiaris (Dog).